A 266-amino-acid chain; its full sequence is MIEAVDICVQRGKKQILKHVDLQAKNGAITVIIGPNGSGKSTFVKALSGEIPYSGKMTLNGHDVTQTKTSKMATMRAVLPQSTTLAFPFLVHEVVELGLSINKFTIAKKQFQNLPQKTLERVGLADYGHRLYHQLSGGEQARVQLARVLCQIWEPICNKIPRWMILDEPIASLDIQHQLVVMNIARNFAHRGGGVLAILHDLNLAAHYADKMILLKQGKVYCEGSASTVLTTQNLRDVYSCSLNVSELPQADIPFILPQTAQPLMK.

In terms of domain architecture, ABC transporter spans 2-242 (IEAVDICVQR…QNLRDVYSCS (241 aa)). 34-41 (GPNGSGKS) contacts ATP.

The protein belongs to the ABC transporter superfamily. Heme (hemin) importer (TC 3.A.1.14.5) family. As to quaternary structure, the complex is composed of two ATP-binding proteins (HmuV), two transmembrane proteins (HmuU) and a solute-binding protein (HmuT).

Its subcellular location is the cell inner membrane. In terms of biological role, part of the ABC transporter complex HmuTUV involved in hemin import. Responsible for energy coupling to the transport system. The polypeptide is Hemin import ATP-binding protein HmuV (Bartonella henselae (strain ATCC 49882 / DSM 28221 / CCUG 30454 / Houston 1) (Rochalimaea henselae)).